Consider the following 198-residue polypeptide: Thymidylate kinase (198 aa).

10 to 17 (GLDGSGKT) contacts ATP.

It belongs to the thymidylate kinase family.

It catalyses the reaction dTMP + ATP = dTDP + ADP. Phosphorylation of dTMP to form dTDP in both de novo and salvage pathways of dTTP synthesis. The sequence is that of Thymidylate kinase from Thermus thermophilus (strain ATCC BAA-163 / DSM 7039 / HB27).